The sequence spans 532 residues: Protein DETOXIFICATION 48 (532 aa).

Transmembrane regions (helical) follow at residues 65–85 (ISGP…ISML), 95–115 (LAGG…VISG), 136–156 (LGLT…PISF), 174–194 (ISSV…LLSL), 211–231 (VTYS…LLVV), 235–255 (MGVA…VVLL), 279–301 (GWSA…WWWY), 322–342 (GILI…SLGV), 363–383 (IISL…AVLV), 397–417 (ILQL…GNCP), 437–457 (INLG…GFVF), and 464–484 (LWFG…CALL). A disordered region spans residues 496-532 (EELTSQTPGKSPPLLPIASSKSRSTSGTEDMMRTMLV). A compositionally biased stretch (polar residues) spans 514–523 (SSKSRSTSGT).

Belongs to the multi antimicrobial extrusion (MATE) (TC 2.A.66.1) family. As to expression, highly expressed in shoot apices relative to leaves. At vegetative stages, highly expressed at the stipules. At reproductive stages, most highly expressed in the mature pollen. Also expressed in the tips of sepals.

It is found in the golgi apparatus membrane. It localises to the late endosome membrane. Functions as a multidrug and toxin extrusion transporter. Contributes to iron homeostasis during stress responses and senescence. Could be involved in specifying the lateral organ initiation rate. May act as a negative regulator of hypocotyl cell elongation in the light. The chain is Protein DETOXIFICATION 48 from Arabidopsis thaliana (Mouse-ear cress).